The primary structure comprises 301 residues: uncharacterized protein (301 aa).

Residues serine 44 and tyrosine 107 each act as charge relay system in the active site. Tyrosine 133 acts as the Proton donor in catalysis. Lysine 162 acts as the Schiff-base intermediate with substrate in catalysis.

Belongs to the DapA family. Homotetramer.

The protein resides in the cytoplasm. This is an uncharacterized protein from Pyrobaculum neutrophilum (strain DSM 2338 / JCM 9278 / NBRC 100436 / V24Sta) (Thermoproteus neutrophilus).